We begin with the raw amino-acid sequence, 480 residues long: Methylenetetrahydrofolate--tRNA-(uracil-5-)-methyltransferase TrmFO (480 aa).

15-20 lines the FAD pocket; it reads GGGLAG.

This sequence belongs to the MnmG family. TrmFO subfamily. FAD serves as cofactor.

The protein localises to the cytoplasm. The enzyme catalyses uridine(54) in tRNA + (6R)-5,10-methylene-5,6,7,8-tetrahydrofolate + NADH + H(+) = 5-methyluridine(54) in tRNA + (6S)-5,6,7,8-tetrahydrofolate + NAD(+). It carries out the reaction uridine(54) in tRNA + (6R)-5,10-methylene-5,6,7,8-tetrahydrofolate + NADPH + H(+) = 5-methyluridine(54) in tRNA + (6S)-5,6,7,8-tetrahydrofolate + NADP(+). Functionally, catalyzes the folate-dependent formation of 5-methyl-uridine at position 54 (M-5-U54) in all tRNAs. The polypeptide is Methylenetetrahydrofolate--tRNA-(uracil-5-)-methyltransferase TrmFO (Caulobacter sp. (strain K31)).